We begin with the raw amino-acid sequence, 99 residues long: Plastocyanin (99 aa).

The Plastocyanin-like domain occupies 1-99; it reads IEIKLGGDDG…AGMVGKVTVQ (99 aa). The Cu cation site is built by His-37, Cys-84, His-87, and Met-92.

This sequence belongs to the plastocyanin family. The cofactor is Cu(2+).

Its subcellular location is the plastid. The protein localises to the chloroplast thylakoid membrane. Participates in electron transfer between P700 and the cytochrome b6-f complex in photosystem I. In Rumex obtusifolius (Bitter dock), this protein is Plastocyanin (PETE).